The sequence spans 455 residues: MKQTTIAAIATAIVPQQGSIGIVRLSGVEAVSIAKQLFQTPGKQQWESHRVLYGYIQQPLTQQIIDEGLLLLMLAPRSYTREDVVEFHCHGGMIAVQQVLEACLQAGAELAQPGEFTLRAFLNGRLDLTQAEGVADLVGARSPQAAQAALAGVQGKLASPIRELRQRCLDTLAEVEARVDFEDDLPPLDEAGVQAELQDIHATLQAILATADQGELLRNGLTVAIIGRPNVGKSSLLNAWCRCDRAIVTDLPGTTRDVVESQLVVGGIPIQVLDTAGIRETEDQVEQIGVTRSHQAAQSADLVLLTIDASVGWTSDDQQLYQAFQDLPLILIVNKVDLVPQEQVVYPEAIAQVVSTIAAQNQGISELETAILETVQTQSLKAANLDWAINQRQAAALQKAQAALEHVQGAIADQLPLDFWTIDLRGAIQALGEITGEDITESVLDRIFSRFCIGK.

(6S)-5-formyl-5,6,7,8-tetrahydrofolate contacts are provided by R24, E86, and R125. Positions 220–376 (GLTVAIIGRP…LETAILETVQ (157 aa)) constitute a TrmE-type G domain. N230 lines the K(+) pocket. Residues 230-235 (NVGKSS), 249-255 (TDLPGTT), and 274-277 (DTAG) contribute to the GTP site. Residue S234 participates in Mg(2+) binding. Positions 249, 251, and 254 each coordinate K(+). T255 contributes to the Mg(2+) binding site. K455 is a (6S)-5-formyl-5,6,7,8-tetrahydrofolate binding site.

It belongs to the TRAFAC class TrmE-Era-EngA-EngB-Septin-like GTPase superfamily. TrmE GTPase family. As to quaternary structure, homodimer. Heterotetramer of two MnmE and two MnmG subunits. Requires K(+) as cofactor.

The protein localises to the cytoplasm. Exhibits a very high intrinsic GTPase hydrolysis rate. Involved in the addition of a carboxymethylaminomethyl (cmnm) group at the wobble position (U34) of certain tRNAs, forming tRNA-cmnm(5)s(2)U34. This is tRNA modification GTPase MnmE from Acaryochloris marina (strain MBIC 11017).